The following is a 90-amino-acid chain: Small ribosomal subunit protein bS20 (90 aa).

Residues 1–27 form a disordered region; the sequence is MANSAQAKKRARQNEKRELHNASQRSA.

It belongs to the bacterial ribosomal protein bS20 family.

Its function is as follows. Binds directly to 16S ribosomal RNA. In Coxiella burnetii (strain CbuK_Q154) (Coxiella burnetii (strain Q154)), this protein is Small ribosomal subunit protein bS20.